We begin with the raw amino-acid sequence, 79 residues long: DNA-directed RNA polymerase subunit omega (79 aa).

This sequence belongs to the RNA polymerase subunit omega family. As to quaternary structure, the RNAP catalytic core consists of 2 alpha, 1 beta, 1 beta' and 1 omega subunit. When a sigma factor is associated with the core the holoenzyme is formed, which can initiate transcription.

It carries out the reaction RNA(n) + a ribonucleoside 5'-triphosphate = RNA(n+1) + diphosphate. Promotes RNA polymerase assembly. Latches the N- and C-terminal regions of the beta' subunit thereby facilitating its interaction with the beta and alpha subunits. This is DNA-directed RNA polymerase subunit omega from Bdellovibrio bacteriovorus (strain ATCC 15356 / DSM 50701 / NCIMB 9529 / HD100).